Reading from the N-terminus, the 196-residue chain is Probable peptidyl-prolyl cis-trans isomerase (196 aa).

Positions 1-26 (MSFIRSALAAAAFVALSIGAVQTASA) are cleaved as a signal peptide. The PPIase cyclophilin-type domain occupies 29-194 (PENTVILKLK…KIIKATIEAD (166 aa)).

It belongs to the cyclophilin-type PPIase family.

Its subcellular location is the periplasm. The catalysed reaction is [protein]-peptidylproline (omega=180) = [protein]-peptidylproline (omega=0). Functionally, PPIases accelerate the folding of proteins. It catalyzes the cis-trans isomerization of proline imidic peptide bonds in oligopeptides. The chain is Probable peptidyl-prolyl cis-trans isomerase (ppi) from Brucella melitensis biotype 1 (strain ATCC 23456 / CCUG 17765 / NCTC 10094 / 16M).